The sequence spans 262 residues: Abhydrolase domain-containing protein ACTT2-2 (262 aa).

A Peroxisomal targeting signal type 1 motif is present at residues 260–262 (SKL).

The protein belongs to the AB hydrolase superfamily. AKT2 hydrolase family.

It localises to the peroxisome. It functions in the pathway mycotoxin biosynthesis. Its function is as follows. Abhydrolase domain-containing protein; part of the gene clusters that mediate the biosynthesis of the host-selective toxins (HSTs) ACT-toxins responsible for brown spot of tangerine disease by the tangerine pathotype which affects tangerines and mandarins. ACT-toxins consist of three moieties, 9,10-epoxy-8-hydroxy-9-methyl-decatrienoic acid (EDA), valine and a polyketide. ACT-toxin I is toxic to both citrus and pear; toxin II the 5''-deoxy derivative of ACT-toxin I, is highly toxic to pear and slightly toxic to citrus. On cellular level, ACT-toxins affect plasma membrane of susceptible cells and cause a sudden increase in loss of K(+) after a few minutes of toxin treatment. The acyl-CoA ligase ACTT1, the hydrolase ACTT2, the enoyl-CoA hydratases ACTT3 and ACTT6, and the acyl-CoA synthetase ACTT5 are all involved in the biosynthesis of the AK-, AF- and ACT-toxin common 9,10-epoxy-8-hydroxy-9-methyl-decatrienoic acid (EDA) structural moiety. The exact role of each enzyme, and of additional enzymes identified within the AF-toxin clusters have still to be determined. On the other hand, ACTTS1 to ACTTS4 are specific to the tangerine pathotype. The function of ACTTS3 is to elongate the polyketide chain portion of ACT-toxin that is unique to this toxin. The enoyl-reductase ACTTS2 might complement the missing enoyl-reductase (ER) domain in ACTTS3 in the synthesis of the polyketide portion of ACT-toxin. The roles of the nonribosomal peptide synthetases-related proteins ACTTS1 and ACTTS4 have also still not been elucidated. In Alternaria alternata (Alternaria rot fungus), this protein is Abhydrolase domain-containing protein ACTT2-2 (ACTT2-2).